Here is a 274-residue protein sequence, read N- to C-terminus: Thiamine kinase (274 aa).

It belongs to the thiamine kinase family.

It carries out the reaction thiamine + ATP = thiamine phosphate + ADP + H(+). It participates in cofactor biosynthesis; thiamine diphosphate biosynthesis; thiamine phosphate from thiamine: step 1/1. In terms of biological role, catalyzes the ATP-dependent phosphorylation of thiamine to thiamine phosphate. Is involved in thiamine salvage. The protein is Thiamine kinase of Escherichia coli (strain SMS-3-5 / SECEC).